A 62-amino-acid chain; its full sequence is ARTTAGSYRRYRRRCCSPRRLYRLRRRRYRSSRRRRRRPCRRRRHRRVCRRVRRRRRCCRRR.

The protein belongs to the protamine P2 family. Post-translationally, proteolytic processing into mature chains is required for histone eviction during spermatogenesis. Transition proteins (TNP1 and TNP2) are required for processing. Testis.

The protein resides in the nucleus. Its subcellular location is the chromosome. Protamines substitute for histones in the chromatin of sperm during the haploid phase of spermatogenesis. They compact sperm DNA into a highly condensed, stable and inactive complex. The sequence is that of Sperm histone P2a from Equus caballus (Horse).